The sequence spans 277 residues: Phosphoenolpyruvate synthase regulatory protein (277 aa).

An ADP-binding site is contributed by Gly157–Thr164.

Belongs to the pyruvate, phosphate/water dikinase regulatory protein family. PSRP subfamily.

The catalysed reaction is [pyruvate, water dikinase] + ADP = [pyruvate, water dikinase]-phosphate + AMP + H(+). The enzyme catalyses [pyruvate, water dikinase]-phosphate + phosphate + H(+) = [pyruvate, water dikinase] + diphosphate. In terms of biological role, bifunctional serine/threonine kinase and phosphorylase involved in the regulation of the phosphoenolpyruvate synthase (PEPS) by catalyzing its phosphorylation/dephosphorylation. The sequence is that of Phosphoenolpyruvate synthase regulatory protein from Escherichia coli O17:K52:H18 (strain UMN026 / ExPEC).